Here is a 413-residue protein sequence, read N- to C-terminus: MTIEEEVLKRIKPSKEDEEKLRERAQIILDRLKGYNAEIEGSFRKGTWLKGDTDIDIFVFFPKSVGKEYLREKALKELIERFRDLNYKIAYAEHPYLIVYVDDVEIDVVPALSIESGEEAITAADRTPFHTKYVISHLDEKGRDEVRLLKRFLKGIGVYGAEIKVKGFSGYVTELLIIYYGSFKEVLRNASKFRPPVRIELVRPKKEFDSPLIVPDPVDPKRNASSAVSLKSLATFALASKIYLEKPSMEFFFPSKPGRQTIKGDILLVKVKIEESTVEDIIWGQVWRNVEKLKTLISHEGYRVIDISAWGDAENITIGIQLESKSIGEYYLNVGPYFYLHNVKNFIEENENVWIGEDGRLYSIKRRRYTVEEIIKRNLSFKQKFTYELQWLTEEVDDPWINLFLRKTPSWLK.

ATP contacts are provided by serine 42 and lysine 45. CTP contacts are provided by serine 42 and lysine 45. Mg(2+) contacts are provided by aspartate 54, aspartate 56, and aspartate 107. ATP contacts are provided by histidine 130, lysine 150, and tyrosine 159. The CTP site is built by histidine 130, lysine 150, and tyrosine 159.

The protein belongs to the tRNA nucleotidyltransferase/poly(A) polymerase family. Archaeal CCA-adding enzyme subfamily. Homodimer. Requires Mg(2+) as cofactor.

The enzyme catalyses a tRNA precursor + 2 CTP + ATP = a tRNA with a 3' CCA end + 3 diphosphate. The catalysed reaction is a tRNA with a 3' CCA end + 2 CTP + ATP = a tRNA with a 3' CCACCA end + 3 diphosphate. Catalyzes the addition and repair of the essential 3'-terminal CCA sequence in tRNAs without using a nucleic acid template. Adds these three nucleotides in the order of C, C, and A to the tRNA nucleotide-73, using CTP and ATP as substrates and producing inorganic pyrophosphate. tRNA 3'-terminal CCA addition is required both for tRNA processing and repair. Also involved in tRNA surveillance by mediating tandem CCA addition to generate a CCACCA at the 3' terminus of unstable tRNAs. While stable tRNAs receive only 3'-terminal CCA, unstable tRNAs are marked with CCACCA and rapidly degraded. In Sulfurisphaera tokodaii (strain DSM 16993 / JCM 10545 / NBRC 100140 / 7) (Sulfolobus tokodaii), this protein is CCA-adding enzyme.